The primary structure comprises 804 residues: MAVSKITLHYAQTTGGSNEAAAAFPWNTPKKAVNPYLDPAEFAPESALSNLIALYAVDNEQEQLRRETLSDEVWERYFFNESRDPVQREMEQDRLINHAKTAREQQRFNPDLVIIANVGAQPAHISKPLLERIKYFHSLGRAKAYSRYLQKTIRPCLERLERVRDSQVSASFRFMASHDGLEGLLVLPEMNQDQVKRLSTLVAAHMSMCLDAACGDLFVSDDVKPEEIRQAWERVAAEAMRLEVIPPAFEQLRRKKRRRKPVPYELIPPSLARMLCADWWYRKLWQMRCEWREEQLRAVCLVNKKASPYVSYEAVIHKREQRRKSLEFFRSHELINEDGDTLDMEDVVNASNSNPAHRRNEMMACVKGLELIAEMRGDCAVFYTITCPSRFHATLNNGRPNPKWTSATVRQSSDYLVDTFAAFRKAMHKAGLRWYGVRVAEPHHDGTVHWHLLCFMRKKDRRSITALLRKFAIREDREELGANTGPRFKPELINPRKGTPTSYIAKYISKNIDGRGLAKEISKETGRSLRDSAEHVSAWASLHRVQQFRFFGIPGRQAYRELRLLAGQAARVQGERKAGAPVLDNPRLDAVLAAADAGCFATYIMKQGGVLVPRKHHLVRTAYELNDEPSAYGDHGIRIYGIWSPIAEGKICTHAVKWKKVRKAVDVQEAAADQGACAPWTRTRTRGNNCPPVENLNKSGGDLPDIKTMNEKELQDYLHNMGQKERRELTARLRLVKPKRKTVYKQNISEQQRLQLEAELTARGFEGSASEIDLLLRGGSIPSGAGLRIFYRNHRLQEDDKWRQ.

Active-site O-(5'-phospho-DNA)-tyrosine intermediate residues include Tyr-503 and Tyr-507.

Belongs to the phage GPA family.

Functionally, possible endonuclease which induces a single-strand cut and initiates DNA replication. This chain is Probable replication endonuclease from prophage-like region 2, found in Salmonella typhi.